The sequence spans 142 residues: 3-hydroxyacyl-[acyl-carrier-protein] dehydratase FabZ (142 aa).

The active site involves histidine 46.

This sequence belongs to the thioester dehydratase family. FabZ subfamily.

It localises to the cytoplasm. The enzyme catalyses a (3R)-hydroxyacyl-[ACP] = a (2E)-enoyl-[ACP] + H2O. Its function is as follows. Involved in unsaturated fatty acids biosynthesis. Catalyzes the dehydration of short chain beta-hydroxyacyl-ACPs and long chain saturated and unsaturated beta-hydroxyacyl-ACPs. In Thermus thermophilus (strain ATCC BAA-163 / DSM 7039 / HB27), this protein is 3-hydroxyacyl-[acyl-carrier-protein] dehydratase FabZ.